The sequence spans 206 residues: Tumor protein D54 (206 aa).

Methionine 1 carries the post-translational modification N-acetylmethionine. Residues 1 to 14 (MDSAGQDINLNSPN) show a composition bias toward polar residues. Residues 1 to 24 (MDSAGQDINLNSPNKGLLSDSMTD) are disordered. Phosphoserine occurs at positions 3, 12, 19, and 21. A coiled-coil region spans residues 38–82 (VEGLTEAEEEELRAELTKVEEEIVTLRQVLAAKERHCGELKRRLG). 3 positions are modified to phosphoserine: serine 96, serine 149, and serine 161. Threonine 163 carries the post-translational modification Phosphothreonine. Residue serine 166 is modified to Phosphoserine. Threonine 173 carries the phosphothreonine modification. The segment covering 175 to 185 (KSKVVGDRENG) has biased composition (basic and acidic residues). Residues 175–206 (KSKVVGDRENGSDSLPSSAGSGDKPLSDPAPF) form a disordered region. Residues serine 192 and serine 195 each carry the phosphoserine modification.

The protein belongs to the TPD52 family. As to quaternary structure, forms a homodimer or heterodimer with other members of the family. Interacts with MAL2.

This Pongo abelii (Sumatran orangutan) protein is Tumor protein D54 (TPD52L2).